Here is a 452-residue protein sequence, read N- to C-terminus: Phosphatidylinositol N-acetylglucosaminyltransferase GPI3 subunit (452 aa).

Residues 407 to 427 traverse the membrane as a helical segment; it reads LYLLCGIVEYMLFFLLEWLYP.

This sequence belongs to the glycosyltransferase group 1 family. Component of the phosphatidylinositol N-acetylglucosaminyltransferase complex composed of at least GPI1, GPI2, GPI3, GPI15, GPI19 and ERI1.

The protein localises to the endoplasmic reticulum membrane. The enzyme catalyses a 1,2-diacyl-sn-glycero-3-phospho-(1D-myo-inositol) + UDP-N-acetyl-alpha-D-glucosamine = a 6-(N-acetyl-alpha-D-glucosaminyl)-1-(1,2-diacyl-sn-glycero-3-phospho)-1D-myo-inositol + UDP + H(+). It functions in the pathway glycolipid biosynthesis; glycosylphosphatidylinositol-anchor biosynthesis. With respect to regulation, inhibited by Ras, probably via the interaction between RAS2 and ERI1. Its function is as follows. Catalytic subunit in the complex catalyzing the transfer of N-acetylglucosamine from UDP-N-acetylglucosamine to phosphatidylinositol, the first step of GPI biosynthesis. The polypeptide is Phosphatidylinositol N-acetylglucosaminyltransferase GPI3 subunit (SPT14) (Saccharomyces cerevisiae (strain RM11-1a) (Baker's yeast)).